The following is a 199-amino-acid chain: N-(5'-phosphoribosyl)anthranilate isomerase (199 aa).

The protein belongs to the TrpF family.

It carries out the reaction N-(5-phospho-beta-D-ribosyl)anthranilate = 1-(2-carboxyphenylamino)-1-deoxy-D-ribulose 5-phosphate. Its pathway is amino-acid biosynthesis; L-tryptophan biosynthesis; L-tryptophan from chorismate: step 3/5. In Streptococcus pneumoniae (strain ATCC 700669 / Spain 23F-1), this protein is N-(5'-phosphoribosyl)anthranilate isomerase.